We begin with the raw amino-acid sequence, 608 residues long: UvrABC system protein C (608 aa).

The GIY-YIG domain maps to 15–93 (HQPGVYRMYN…IKQYLPKYNV (79 aa)). The 36-residue stretch at 203–238 (RQVIQTLVKQMESASQSLNFEKAAIIRDQIQAMRRV) folds into the UVR domain.

This sequence belongs to the UvrC family. Interacts with UvrB in an incision complex.

It is found in the cytoplasm. Its function is as follows. The UvrABC repair system catalyzes the recognition and processing of DNA lesions. UvrC both incises the 5' and 3' sides of the lesion. The N-terminal half is responsible for the 3' incision and the C-terminal half is responsible for the 5' incision. The protein is UvrABC system protein C of Aliivibrio fischeri (strain ATCC 700601 / ES114) (Vibrio fischeri).